A 133-amino-acid polypeptide reads, in one-letter code: DNA-directed RNA polymerases I and III subunit RPAC2 (133 aa).

Met-1 carries the N-acetylmethionine modification. Positions 1–22 (MEEDQELERKMSGVKTSMAEGE) are disordered.

This sequence belongs to the archaeal Rpo11/eukaryotic RPB11/RPC19 RNA polymerase subunit family. Component of the RNA polymerase I and RNA polymerase III complexes consisting of at least 13 and 17 subunits, respectively. The transcriptionally active RNA polymerase III complex consists of a ten-subunit horseshoe-shaped catalytic core composed of POLR3A/RPC1, POLR3B/RPC2, POLR1C/RPAC1, POLR1D/RPAC2, POLR3K/RPC10, POLR2E/RPABC1, POLR2F/RPABC2, POLR2H/RPABC3, POLR2K/RPABC4 and POLR2L/RPABC5; a mobile stalk composed of two subunits POLR3H/RPC8 and CRCP/RPC9, protruding from the core and functioning primarily in transcription initiation; and additional subunits homologous to general transcription factors of the RNA polymerase II machinery, POLR3C/RPC3-POLR3F/RPC6-POLR3G/RPC7 heterotrimer required for transcription initiation and POLR3D/RPC4-POLR3E/RPC5 heterodimer involved in both transcription initiation and termination.

The protein resides in the nucleus. DNA-dependent RNA polymerase catalyzes the transcription of DNA into RNA using the four ribonucleoside triphosphates as substrates. Common component of RNA polymerases I and III which synthesize ribosomal RNA precursor pre-rRNA and short non-coding RNAs including 5S rRNA, snRNAs, tRNAs and miRNAs, respectively. This chain is DNA-directed RNA polymerases I and III subunit RPAC2 (POLR1D), found in Bos taurus (Bovine).